Reading from the N-terminus, the 170-residue chain is Glycine cleavage system H protein, mitochondrial (170 aa).

The transit peptide at 1–45 directs the protein to the mitochondrion; it reads MSLRVVRSVRAVACSLRIALASCPPRPWAPSAAAVRSLRTGSALL. A Lipoyl-binding domain is found at 63-145; it reads IGTVGISNFA…YEDGWLIKMT (83 aa). Lys-104 is modified (N6-lipoyllysine).

It belongs to the GcvH family. The glycine cleavage system is composed of four proteins: P (GLDC), T (GCST), L (DLD) and H (GCSH). Interacts with GLDC. (R)-lipoate is required as a cofactor.

It localises to the mitochondrion. The glycine cleavage system catalyzes the degradation of glycine. The H protein (GCSH) shuttles the methylamine group of glycine from the P protein (GLDC) to the T protein (GCST). Has a pivotal role in the lipoylation of enzymes involved in cellular energetics such as the mitochondrial dihydrolipoyllysine-residue acetyltransferase component of pyruvate dehydrogenase complex (DLAT), and the mitochondrial dihydrolipoyllysine-residue succinyltransferase component of 2-oxoglutarate dehydrogenase complex (DLST). The sequence is that of Glycine cleavage system H protein, mitochondrial from Rattus norvegicus (Rat).